A 302-amino-acid chain; its full sequence is tRNA dimethylallyltransferase (302 aa).

9-16 provides a ligand contact to ATP; sequence GPTAAGKS. 11–16 provides a ligand contact to substrate; it reads TAAGKS. Residues 34-37 are interaction with substrate tRNA; it reads DSRQ.

It belongs to the IPP transferase family. Monomer. Requires Mg(2+) as cofactor.

The catalysed reaction is adenosine(37) in tRNA + dimethylallyl diphosphate = N(6)-dimethylallyladenosine(37) in tRNA + diphosphate. Catalyzes the transfer of a dimethylallyl group onto the adenine at position 37 in tRNAs that read codons beginning with uridine, leading to the formation of N6-(dimethylallyl)adenosine (i(6)A). The chain is tRNA dimethylallyltransferase from Gloeobacter violaceus (strain ATCC 29082 / PCC 7421).